The sequence spans 860 residues: Protein translocase subunit SecA (860 aa).

Residues Gln87, 105–109, and Asp514 each bind ATP; that span reads GEGKT. Cys846, Cys848, Cys857, and Cys858 together coordinate Zn(2+).

It belongs to the SecA family. As to quaternary structure, monomer and homodimer. Part of the essential Sec protein translocation apparatus which comprises SecA, SecYEG and auxiliary proteins SecDF. Other proteins may also be involved. Zn(2+) serves as cofactor.

Its subcellular location is the cell membrane. The protein resides in the cytoplasm. The catalysed reaction is ATP + H2O + cellular proteinSide 1 = ADP + phosphate + cellular proteinSide 2.. Its function is as follows. Part of the Sec protein translocase complex. Interacts with the SecYEG preprotein conducting channel. Has a central role in coupling the hydrolysis of ATP to the transfer of proteins into and across the cell membrane, serving as an ATP-driven molecular motor driving the stepwise translocation of polypeptide chains across the membrane. In Endomicrobium trichonymphae, this protein is Protein translocase subunit SecA.